The sequence spans 697 residues: Elongation factor G 2 (697 aa).

The tr-type G domain maps to 5 to 280 (SKYRNIGIFA…AVVDYLPAPN (276 aa)). GTP contacts are provided by residues 14 to 21 (AHVDAGKT), 78 to 82 (DTPGH), and 132 to 135 (NKLD).

This sequence belongs to the TRAFAC class translation factor GTPase superfamily. Classic translation factor GTPase family. EF-G/EF-2 subfamily.

The protein localises to the cytoplasm. Its function is as follows. Catalyzes the GTP-dependent ribosomal translocation step during translation elongation. During this step, the ribosome changes from the pre-translocational (PRE) to the post-translocational (POST) state as the newly formed A-site-bound peptidyl-tRNA and P-site-bound deacylated tRNA move to the P and E sites, respectively. Catalyzes the coordinated movement of the two tRNA molecules, the mRNA and conformational changes in the ribosome. This Shewanella sp. (strain MR-4) protein is Elongation factor G 2.